The sequence spans 72 residues: Small ribosomal subunit protein bS20 (72 aa).

It belongs to the bacterial ribosomal protein bS20 family.

Its function is as follows. Binds directly to 16S ribosomal RNA. This is Small ribosomal subunit protein bS20 (rpsT) from Aeromonas hydrophila.